A 233-amino-acid chain; its full sequence is Large ribosomal subunit protein uL1 (233 aa).

Belongs to the universal ribosomal protein uL1 family. Part of the 50S ribosomal subunit.

Functionally, binds directly to 23S rRNA. The L1 stalk is quite mobile in the ribosome, and is involved in E site tRNA release. Its function is as follows. Protein L1 is also a translational repressor protein, it controls the translation of the L11 operon by binding to its mRNA. The polypeptide is Large ribosomal subunit protein uL1 (Photobacterium profundum (strain SS9)).